A 1756-amino-acid polypeptide reads, in one-letter code: Transposon Ty1-BR Gag-Pol polyprotein (1756 aa).

Polar residues-rich tracts occupy residues 1–10, 48–60, and 127–152; these read MESQQLSNYP, TKANSQQTTTPAS, and QSQFPQYPSSVGTPLSTPSPESGNTF. 3 disordered regions span residues 1 to 93, 126 to 173, and 352 to 421; these read MESQ…MMTQ, PQSQ…RPPP, and GSRN…SKST. A compositionally biased stretch (low complexity) spans 153–165; it reads TDSSSADSDMTST. Residues 299–401 are RNA-binding; it reads NNGIHINNKV…NSKSKTARAH (103 aa). Residues 402–418 are compositionally biased toward low complexity; sequence NVSTSNNSPSTDNDSIS. Residue Ser416 is modified to Phosphoserine. The active-site For protease activity; shared with dimeric partner is Asp461. Positions 583-640 are integrase-type zinc finger-like; it reads NVHTSESTRKYPYPFIHRMLAHANAQTIRYSLKNNTITYFNESDVDWSSAIDYQCPDC. The Integrase catalytic domain occupies 660–835; the sequence is NSYEPFQYLH…AGLDISTLLP (176 aa). Residues Asp671 and Asp736 each contribute to the Mg(2+) site. Disordered regions lie at residues 956–1088 and 1142–1173; these read SKAV…TEKR and PTELSDSFKELPPINSRQTNSSLGGIGDSNAY. Residues 960–969 show a composition bias toward low complexity; that stretch reads SPTDSTPPST. 2 stretches are compositionally biased toward polar residues: residues 1005–1017 and 1031–1043; these read STPQISDIESTDS and MSQSNTHESSYAS. Over residues 1044–1053 the composition is skewed to basic and acidic residues; sequence KSKDFRHSDS. Residues 1054-1082 are compositionally biased toward polar residues; the sequence is YSDNETNHTNVPISSTGGTNNKTVPQTSE. Positions 1179–1213 match the Bipartite nuclear localization signal motif; the sequence is KKRSLEDNETEIKVSRDTWNTKNMRSLEPPRSKKR. The Reverse transcriptase Ty1/copia-type domain maps to 1339-1477; it reads NNYYITQLDI…DILGLEIKYQ (139 aa). Residues Asp1347, Asp1428, Asp1429, Asp1611, Glu1653, and Asp1686 each contribute to the Mg(2+) site. Residues 1611–1753 form the RNase H Ty1/copia-type domain; it reads DASYGNQPYY…IKTFKLLTNK (143 aa).

The capsid protein forms a homotrimer, from which the VLPs are assembled. The protease is a homodimer, whose active site consists of two apposed aspartic acid residues. Post-translationally, initially, virus-like particles (VLPs) are composed of the structural unprocessed proteins Gag and Gag-Pol, and also contain the host initiator methionine tRNA (tRNA(i)-Met) which serves as a primer for minus-strand DNA synthesis, and a dimer of genomic Ty RNA. Processing of the polyproteins occurs within the particle and proceeds by an ordered pathway, called maturation. First, the protease (PR) is released by autocatalytic cleavage of the Gag-Pol polyprotein yielding capsid protein p45 and a Pol-p154 precursor protein. This cleavage is a prerequisite for subsequent processing of Pol-p154 at the remaining sites to release the mature structural and catalytic proteins. Maturation takes place prior to the RT reaction and is required to produce transposition-competent VLPs.

It is found in the cytoplasm. The protein resides in the nucleus. The enzyme catalyses DNA(n) + a 2'-deoxyribonucleoside 5'-triphosphate = DNA(n+1) + diphosphate. It catalyses the reaction Endonucleolytic cleavage to 5'-phosphomonoester.. Functionally, capsid protein (CA) is the structural component of the virus-like particle (VLP), forming the shell that encapsulates the retrotransposons dimeric RNA genome. The particles are assembled from trimer-clustered units and there are holes in the capsid shells that allow for the diffusion of macromolecules. CA also has nucleocapsid-like chaperone activity, promoting primer tRNA(i)-Met annealing to the multipartite primer-binding site (PBS), dimerization of Ty1 RNA and initiation of reverse transcription. In terms of biological role, the aspartyl protease (PR) mediates the proteolytic cleavages of the Gag and Gag-Pol polyproteins after assembly of the VLP. Its function is as follows. Reverse transcriptase/ribonuclease H (RT) is a multifunctional enzyme that catalyzes the conversion of the retro-elements RNA genome into dsDNA within the VLP. The enzyme displays a DNA polymerase activity that can copy either DNA or RNA templates, and a ribonuclease H (RNase H) activity that cleaves the RNA strand of RNA-DNA heteroduplexes during plus-strand synthesis and hydrolyzes RNA primers. The conversion leads to a linear dsDNA copy of the retrotransposon that includes long terminal repeats (LTRs) at both ends. Integrase (IN) targets the VLP to the nucleus, where a subparticle preintegration complex (PIC) containing at least integrase and the newly synthesized dsDNA copy of the retrotransposon must transit the nuclear membrane. Once in the nucleus, integrase performs the integration of the dsDNA into the host genome. In Saccharomyces cerevisiae (strain ATCC 204508 / S288c) (Baker's yeast), this protein is Transposon Ty1-BR Gag-Pol polyprotein (TY1B-BR).